Reading from the N-terminus, the 570-residue chain is Repressible high-affinity phosphate permease (570 aa).

Over Met1 to Asp61 the chain is Cytoplasmic. A helical transmembrane segment spans residues Ser62–Gly82. Over Glu83–Lys95 the chain is Extracellular. Residues Leu96–Phe116 form a helical membrane-spanning segment. Over Gly117 to Ser120 the chain is Cytoplasmic. The helical transmembrane segment at Met121 to Gly141 threads the bilayer. The Extracellular portion of the chain corresponds to Ser142–Pro143. A helical transmembrane segment spans residues Ser144 to Gly164. The Cytoplasmic segment spans residues Asp165–Met186. Residues Gly187 to Val207 traverse the membrane as a helical segment. Residues Thr208–Arg237 lie on the Extracellular side of the membrane. The helical transmembrane segment at Thr238–Pro258 threads the bilayer. Over Glu259 to Asn325 the chain is Cytoplasmic. Residues Ala326–Val346 form a helical membrane-spanning segment. The Extracellular portion of the chain corresponds to Ser347–Thr374. The helical transmembrane segment at Ala375–Phe395 threads the bilayer. Over Thr396–Lys403 the chain is Cytoplasmic. The helical transmembrane segment at Pro404–Tyr424 threads the bilayer. Over Lys425 to Leu433 the chain is Extracellular. A helical transmembrane segment spans residues Ala434–Val454. The Cytoplasmic portion of the chain corresponds to Pro455 to His468. A helical transmembrane segment spans residues Gly469 to Leu489. Residues Arg490 to Asn505 are Extracellular-facing. Residues His506–Pro526 form a helical membrane-spanning segment. Residues Glu527–Ala570 lie on the Cytoplasmic side of the membrane. Residues Ser537–Glu546 are compositionally biased toward acidic residues. The segment at Ser537–Ala570 is disordered. Basic and acidic residues predominate over residues Glu547–Glu560. The segment covering Ala561–Ala570 has biased composition (polar residues).

The protein belongs to the major facilitator superfamily. Sugar transporter (TC 2.A.1.1) family.

The protein localises to the cell membrane. Its activity is regulated as follows. Phosphate transport activity is competitively inhibited by arsenate. High-affinity transporter for external inorganic phosphate. Acts probably as a H(+)-phosphate symporter. The polypeptide is Repressible high-affinity phosphate permease (Neurospora crassa (strain ATCC 24698 / 74-OR23-1A / CBS 708.71 / DSM 1257 / FGSC 987)).